Consider the following 522-residue polypeptide: Insulinoma-associated protein 1 (522 aa).

Residues 1 to 12 (MPRGFLVKRSKK) are compositionally biased toward basic residues. The tract at residues 1 to 20 (MPRGFLVKRSKKSTPVSYRI) is SNAG domain. Disordered regions lie at residues 1–112 (MPRG…SREH) and 182–235 (AAEA…KPKA). The required and sufficient for interaction with KDM1A stretch occupies residues 2 to 7 (PRGFLV). The segment at 43 to 57 (PPAPGPGPVPGPLQP) is necessary for interaction with CCND1. Pro residues predominate over residues 43–61 (PPAPGPGPVPGPLQPPPPT). Low complexity-rich tracts occupy residues 66 to 75 (AALAAALACA) and 212 to 228 (ASAAAAAEPPAKVAKAP). The C2H2-type 1; atypical zinc finger occupies 277-297 (FICQLCKEEYADPFALAQHKC). The segment at 305–327 (YRCPECAKVFSCPANLASHRRWH) adopts a C2H2-type 2 zinc-finger fold. The disordered stretch occupies residues 325–373 (RWHKPRPAPAAARACEPETPARAEAREATGGGGSDRDTPSPGGVSESGS). Residues 339–351 (CEPETPARAEARE) are compositionally biased toward basic and acidic residues. 3 consecutive C2H2-type zinc fingers follow at residues 378–400 (YECHHCAKKFRRQAYLRKHLLAH), 453–476 (HLCPVCGETFPSKGAQERHLRLLH), and 481–504 (FPCKYCPATFYSSPGLTRHINKCH).

The protein belongs to the INSM1 family. In terms of assembly, interacts (via the N-terminal region) with CCND1 (via cyclin N-terminal domain); the interaction competes with the binding of CCND1 to CDK4 during cell cycle progression and increases its transcriptional repressor activity. Interacts with HDAC3; the interaction increases its transcriptional repressor activity. Interacts (via the SNAG domain) with HDAC1. Interacts (via the SNAG domain) with HDAC2. Interacts (via the SNAG domain) with KDM1A. Interacts (via the SNAG domain) with RCOR1. Interacts with SORBS1.

It localises to the nucleus. Functionally, sequence-specific DNA-binding transcriptional regulator that plays a key role in neurogenesis and neuroendocrine cell differentiation during embryonic and/or fetal development. Binds to the consensus sequence 5'-[TG][TC][TC][TT][GA]GGG[CG]A-3' in target promoters. Acts as a transcriptional repressor of NEUROD1 and INS expression via its interaction with cyclin CCND1 in a cell cycle-independent manner. Negatively regulates skeletal muscle-specific gene expression in endocrine cells of the pituitary by inhibiting the Notch signaling pathway. Represses target gene transcription by recruiting chromatin-modifying factors, such as HDAC1, HDAC2, HDAC3, KDM1A and RCOR1 histone deacetylases. Binds to its own promoter, suggesting autoregulation as a self-control feedback mechanism. Competes with histone H3 for the same binding site on the histone demethylase complex formed by KDM1A and RCOR1, and thereby inhibits demethylation of histone H3 at 'Lys-4'. Promotes the generation and expansion of neuronal basal progenitor cells in the developing neocortex. Involved in the differentiation of endocrine cells of the developing anterior pituitary gland, of the pancreas and intestine, and of sympatho-adrenal cells in the peripheral nervous system. Promotes cell cycle signaling arrest and inhibition of cellular proliferation. This is Insulinoma-associated protein 1 (INSM1) from Bos taurus (Bovine).